The sequence spans 185 residues: HTH-type transcriptional regulator SACOL2593 (185 aa).

Residues 6-66 (KENRQRIEEI…YVIQRDLDIF (61 aa)) form the HTH tetR-type domain. Residues 29–48 (SMNRIAKELGIGMGTLYRHF) constitute a DNA-binding region (H-T-H motif).

In Staphylococcus aureus (strain COL), this protein is HTH-type transcriptional regulator SACOL2593.